Consider the following 161-residue polypeptide: Endoribonuclease YbeY (161 aa).

Residues His121, His125, and His131 each contribute to the Zn(2+) site.

This sequence belongs to the endoribonuclease YbeY family. Requires Zn(2+) as cofactor.

It is found in the cytoplasm. In terms of biological role, single strand-specific metallo-endoribonuclease involved in late-stage 70S ribosome quality control and in maturation of the 3' terminus of the 16S rRNA. In Xanthomonas oryzae pv. oryzae (strain MAFF 311018), this protein is Endoribonuclease YbeY.